The chain runs to 469 residues: MIPVTSFRGKKVALFGLGGSGLVTARALVAGGAAVVAFDDNPDSVAKAQAEGIATADLHTIDWSSFSSFVLAPGVPLTHPKPHWSVDLAKAAGVEVIGDIELFIRERRVHAPDCPFIAITGTNGKSTTTALIAHILQSSGRDTQLGGNIGTAVLSLDPPKAQRFYVVECSSYQIDLAPTINPTAGILLNLTPDHLDRHGTMQHYADVKERLVAGSGTAIVGVDDSHSTLIADRIERAGVKVERISKRNVVSEGLYAEGSQILRAHGGTSSLLVDLDGIQTLRGSHNAQNAAAAIAACLAVGVSEEEIRAGLKSFPGLKHRMQPVGRRGNVTFVNDSKATNADAAAPALSSFDRIYWIAGGLPKAGGITSLSPLFPRIAKAYLIGEAAAEFAATLGEAVPYEISGTLDKAVQHAAADAEKDATAGNVVMLSPACASFDQYKNFEIRGDSFVAQVAALEGMTMLVHSGKGG.

An ATP-binding site is contributed by 121 to 127; it reads GTNGKST.

The protein belongs to the MurCDEF family.

It is found in the cytoplasm. The enzyme catalyses UDP-N-acetyl-alpha-D-muramoyl-L-alanine + D-glutamate + ATP = UDP-N-acetyl-alpha-D-muramoyl-L-alanyl-D-glutamate + ADP + phosphate + H(+). The protein operates within cell wall biogenesis; peptidoglycan biosynthesis. Cell wall formation. Catalyzes the addition of glutamate to the nucleotide precursor UDP-N-acetylmuramoyl-L-alanine (UMA). This Agrobacterium fabrum (strain C58 / ATCC 33970) (Agrobacterium tumefaciens (strain C58)) protein is UDP-N-acetylmuramoylalanine--D-glutamate ligase.